The following is a 165-amino-acid chain: Transcription antitermination protein NusB (165 aa).

Positions Met1–Gln20 are disordered.

This sequence belongs to the NusB family.

In terms of biological role, involved in transcription antitermination. Required for transcription of ribosomal RNA (rRNA) genes. Binds specifically to the boxA antiterminator sequence of the ribosomal RNA (rrn) operons. This Agrobacterium fabrum (strain C58 / ATCC 33970) (Agrobacterium tumefaciens (strain C58)) protein is Transcription antitermination protein NusB.